A 450-amino-acid polypeptide reads, in one-letter code: V-type proton ATPase subunit H (450 aa).

Belongs to the V-ATPase H subunit family. In terms of assembly, V-ATPase is a heteromultimeric enzyme composed of a peripheral catalytic V1 complex (components A to H) attached to an integral membrane V0 proton pore complex (components: a, c, c', c'', d, e, f and VOA1).

It localises to the vacuole membrane. Subunit of the V1 complex of vacuolar(H+)-ATPase (V-ATPase), a multisubunit enzyme composed of a peripheral complex (V1) that hydrolyzes ATP and a membrane integral complex (V0) that translocates protons. V-ATPase is responsible for acidifying and maintaining the pH of intracellular compartments. This subunit is essential for activity, but not assembly, of the enzyme complex. This subunit is also required for silencing the ATPase activity of V-ATPase when V1 is detached from V0. The sequence is that of V-type proton ATPase subunit H (vma13) from Schizosaccharomyces pombe (strain 972 / ATCC 24843) (Fission yeast).